We begin with the raw amino-acid sequence, 153 residues long: Large ribosomal subunit protein bL9 (153 aa).

Belongs to the bacterial ribosomal protein bL9 family.

In terms of biological role, binds to the 23S rRNA. This is Large ribosomal subunit protein bL9 from Micrococcus luteus (strain ATCC 4698 / DSM 20030 / JCM 1464 / CCM 169 / CCUG 5858 / IAM 1056 / NBRC 3333 / NCIMB 9278 / NCTC 2665 / VKM Ac-2230) (Micrococcus lysodeikticus).